A 479-amino-acid chain; its full sequence is Sulfate adenylyltransferase subunit 1 (479 aa).

Residues 25–239 form the tr-type G domain; that stretch reads KSLLRFLTCG…EVLETVDIQR (215 aa). Residues 34-41 are G1; that stretch reads GSVDDGKS. 34-41 is a GTP binding site; that stretch reads GSVDDGKS. A G2 region spans residues 92-96; that stretch reads GITID. Residues 113–116 form a G3 region; the sequence is DTPG. Residues 113–117 and 168–171 contribute to the GTP site; these read DTPGH and NKMD. The G4 stretch occupies residues 168–171; the sequence is NKMD. The tract at residues 206–208 is G5; it reads SAL.

Belongs to the TRAFAC class translation factor GTPase superfamily. Classic translation factor GTPase family. CysN/NodQ subfamily. In terms of assembly, heterodimer composed of CysD, the smaller subunit, and CysN.

The catalysed reaction is sulfate + ATP + H(+) = adenosine 5'-phosphosulfate + diphosphate. It participates in sulfur metabolism; hydrogen sulfide biosynthesis; sulfite from sulfate: step 1/3. Functionally, with CysD forms the ATP sulfurylase (ATPS) that catalyzes the adenylation of sulfate producing adenosine 5'-phosphosulfate (APS) and diphosphate, the first enzymatic step in sulfur assimilation pathway. APS synthesis involves the formation of a high-energy phosphoric-sulfuric acid anhydride bond driven by GTP hydrolysis by CysN coupled to ATP hydrolysis by CysD. In Salmonella agona (strain SL483), this protein is Sulfate adenylyltransferase subunit 1.